We begin with the raw amino-acid sequence, 200 residues long: uncharacterized protein (200 aa).

The protein belongs to the HAD-like hydrolase superfamily. CbbY/CbbZ/Gph/YieH family.

This is an uncharacterized protein from Haemophilus influenzae (strain ATCC 51907 / DSM 11121 / KW20 / Rd).